Reading from the N-terminus, the 343-residue chain is Probable dual-specificity RNA methyltransferase RlmN (343 aa).

Glutamate 83 (proton acceptor) is an active-site residue. The 235-residue stretch at tyrosine 89–aspartate 323 folds into the Radical SAM core domain. Cysteine 96 and cysteine 328 are disulfide-bonded. [4Fe-4S] cluster contacts are provided by cysteine 103, cysteine 107, and cysteine 110. S-adenosyl-L-methionine-binding positions include glycine 153 to glutamate 154, serine 185, serine 209 to histidine 211, and asparagine 285. Catalysis depends on cysteine 328, which acts as the S-methylcysteine intermediate.

The protein belongs to the radical SAM superfamily. RlmN family. Requires [4Fe-4S] cluster as cofactor.

Its subcellular location is the cytoplasm. The enzyme catalyses adenosine(2503) in 23S rRNA + 2 reduced [2Fe-2S]-[ferredoxin] + 2 S-adenosyl-L-methionine = 2-methyladenosine(2503) in 23S rRNA + 5'-deoxyadenosine + L-methionine + 2 oxidized [2Fe-2S]-[ferredoxin] + S-adenosyl-L-homocysteine. It catalyses the reaction adenosine(37) in tRNA + 2 reduced [2Fe-2S]-[ferredoxin] + 2 S-adenosyl-L-methionine = 2-methyladenosine(37) in tRNA + 5'-deoxyadenosine + L-methionine + 2 oxidized [2Fe-2S]-[ferredoxin] + S-adenosyl-L-homocysteine. Its function is as follows. Specifically methylates position 2 of adenine 2503 in 23S rRNA and position 2 of adenine 37 in tRNAs. This Deinococcus deserti (strain DSM 17065 / CIP 109153 / LMG 22923 / VCD115) protein is Probable dual-specificity RNA methyltransferase RlmN.